The following is a 349-amino-acid chain: Isopentenyl-diphosphate delta-isomerase (349 aa).

6–7 is a substrate binding site; sequence RK. FMN-binding positions include 62–64, Ser93, and Asn122; that span reads AMT. Gln152 contributes to the substrate binding site. Glu153 is a Mg(2+) binding site. FMN is bound by residues Lys184, Thr214, 258 to 259, and 280 to 281; these read GG and AG.

It belongs to the IPP isomerase type 2 family. As to quaternary structure, homooctamer. Dimer of tetramers. The cofactor is FMN. It depends on NADPH as a cofactor. Mg(2+) serves as cofactor.

The protein resides in the cytoplasm. It catalyses the reaction isopentenyl diphosphate = dimethylallyl diphosphate. Involved in the biosynthesis of isoprenoids. Catalyzes the 1,3-allylic rearrangement of the homoallylic substrate isopentenyl (IPP) to its allylic isomer, dimethylallyl diphosphate (DMAPP). This Bacillus subtilis (strain 168) protein is Isopentenyl-diphosphate delta-isomerase.